The primary structure comprises 1239 residues: Structural polyprotein (1239 aa).

The tract at residues 15–95 (RPAPVQRYIP…KKKSKPGKRM (81 aa)) is disordered. The interval 36–62 (RGPSQLQQLVAALGALALQPKQKQKRA) is host transcription inhibition. Over residues 38 to 56 (PSQLQQLVAALGALALQPK) the composition is skewed to low complexity. Positions 55 to 91 (PKQKQKRAQKKPKKTPPPKPKKTQKPKKPTQKKKSKP) match the Nuclear localization signal motif. Positions 57–95 (QKQKRAQKKPKKTPPPKPKKTQKPKKPTQKKKSKPGKRM) are enriched in basic residues. The interval 78-106 (QKPKKPTQKKKSKPGKRMRNCMKIENDCI) is binding to the viral RNA. Residues 91 to 105 (PGKRMRNCMKIENDC) form a ribosome-binding region. A disulfide bond links cysteine 105 and cysteine 120. Residues 105–253 (CIFPVMLDGK…RITPEESVEW (149 aa)) form the Peptidase S3 domain. Residue histidine 131 is the Charge relay system of the active site. The Nuclear export signal signature appears at 136-146 (IDNPELAKLTF). The interaction with spike glycoprotein E2 stretch occupies residues 147 to 152 (KKSSKY). Catalysis depends on aspartate 153, which acts as the Charge relay system. The interval 175 to 185 (PEGHYNWHHGA) is dimerization of the capsid protein. Serine 205 functions as the Charge relay system in the catalytic mechanism. The interval 211–215 (DNTGK) is dimerization of the capsid protein. The tract at residues 254 to 269 (SAAALNITALCVLQNL) is functions as an uncleaved signal peptide for the precursor of protein E3/E2. Disulfide bonds link cysteine 264–cysteine 273, cysteine 278–cysteine 282, cysteine 281–cysteine 313, cysteine 339–cysteine 443, cysteine 342–cysteine 348, cysteine 411–cysteine 425, cysteine 471–cysteine 585, cysteine 519–cysteine 545, and cysteine 521–cysteine 539. A glycan (N-linked (GlcNAc...) asparagine; by host) is linked at asparagine 268. Topologically, residues 322–686 (SVAHFEAYKA…HYYDLYPYWT (365 aa)) are extracellular. The helical transmembrane segment at 687 to 707 (ITVLASLGLLIVISSGFSCFL) threads the bilayer. 2 S-palmitoyl cysteine; by host lipidation sites follow: cysteine 705 and cysteine 708. Residues 708 to 751 (CSVARTKCLTPYQLAPGAQLPTFIALLCCAKSARADTLDDFSYL) lie on the Cytoplasmic side of the membrane. The interaction with the capsid protein stretch occupies residues 710 to 714 (VARTK). 3 S-palmitoyl cysteine; by host lipidation sites follow: cysteine 715, cysteine 735, and cysteine 736. The cysteines at positions 715 and 736 are disulfide-linked. Topologically, residues 752–756 (WTNNQ) are extracellular. The chain crosses the membrane as a helical span at residues 757 to 777 (AMFWLQLASPVAAFLCLSYCC). Residues 778–779 (RN) lie on the Cytoplasmic side of the membrane. The chain crosses the membrane as a helical span at residues 780–800 (LACCMKIFLGISGLCVIATQA). Residues 801-1216 (YEHSTTMPNQ…WQWLAHTTSG (416 aa)) are Extracellular-facing. Intrachain disulfides connect cysteine 849–cysteine 914, cysteine 862–cysteine 894, cysteine 863–cysteine 896, and cysteine 868–cysteine 878. Residues 884 to 901 (VYPFMWGGAYCFCDTENS) are E1 fusion peptide loop. N-linked (GlcNAc...) asparagine; by host glycans are attached at residues asparagine 941, asparagine 1009, and asparagine 1070. 4 disulfide bridges follow: cysteine 1059–cysteine 1071, cysteine 1101–cysteine 1176, cysteine 1106–cysteine 1180, and cysteine 1128–cysteine 1170. A helical membrane pass occupies residues 1217-1237 (PLTILVVAIIVVVVVSIVVCA). Cysteine 1236 carries S-palmitoyl cysteine; by host lipidation. Topologically, residues 1238–1239 (RH) are cytoplasmic.

As to quaternary structure, homodimer. Homomultimer. Interacts with host karyopherin KPNA4; this interaction allows the nuclear import of the viral capsid protein. Interacts with spike glycoprotein E2. Interacts with host IRAK1; the interaction leads to inhibition of IRAK1-dependent signaling. In terms of assembly, the precursor of protein E3/E2 and E1 form a heterodimer shortly after synthesis. Interacts with spike glycoprotein E1. The precursor of protein E3/E2 and E1 form a heterodimer shortly after synthesis. Processing of the precursor of protein E3/E2 into E2 and E3 results in a heterodimer of the spike glycoproteins E2 and E1. Spike at virion surface are constituted of a trimer of E2-E1 heterodimers. After target cell attachment and endocytosis, E1 change conformation to form homotrimers. Interacts with 6K protein. As to quaternary structure, interacts with spike glycoprotein E1. Processing of the precursor of protein E3/E2 into E2 and E3 results in a heterodimer of the spike glycoproteins E2 and E1. Spike at virion surface are constituted of a trimer of E2-E1 heterodimers. Interacts with 6K protein. Interacts with host MXRA8; this interaction mediates virus entry. Interacts with the capsid protein. In terms of assembly, oligomer. Interacts with spike glycoprotein E1. Interacts with spike glycoprotein E2. In terms of processing, structural polyprotein: Specific enzymatic cleavages in vivo yield mature proteins. Capsid protein is auto-cleaved during polyprotein translation, unmasking a signal peptide at the N-terminus of the precursor of E3/E2. The remaining polyprotein is then targeted to the host endoplasmic reticulum, where host signal peptidase cleaves it into pE2, 6K and E1 proteins. pE2 is further processed to mature E3 and E2 by host furin in trans-Golgi vesicle. Post-translationally, palmitoylated via thioester bonds. These palmitoylations may induce disruption of the C-terminus transmembrane. This would result in the reorientation of E2 C-terminus from lumenal to cytoplasmic side. N-glycosylated. In terms of processing, palmitoylated via thioester bonds.

The protein resides in the virion. It is found in the host cytoplasm. Its subcellular location is the host cell membrane. The protein localises to the host nucleus. It localises to the virion membrane. The protein resides in the host Golgi apparatus. It is found in the host trans-Golgi network. Its subcellular location is the host endoplasmic reticulum. The catalysed reaction is Autocatalytic release of the core protein from the N-terminus of the togavirus structural polyprotein by hydrolysis of a -Trp-|-Ser- bond.. Functionally, forms an icosahedral capsid with a T=4 symmetry composed of 240 copies of the capsid protein surrounded by a lipid membrane through which penetrate 80 spikes composed of trimers of E1-E2 heterodimers. The capsid protein binds to the viral RNA genome at a site adjacent to a ribosome binding site for viral genome translation following genome release. Possesses a protease activity that results in its autocatalytic cleavage from the nascent structural protein. Following its self-cleavage, the capsid protein transiently associates with ribosomes, and within several minutes the protein binds to viral RNA and rapidly assembles into icosahedric core particles. The resulting nucleocapsid eventually associates with the cytoplasmic domain of the spike glycoprotein E2 at the cell membrane, leading to budding and formation of mature virions. In case of infection, new virions attach to target cells and after clathrin-mediated endocytosis their membrane fuses with the host endosomal membrane. This leads to the release of the nucleocapsid into the cytoplasm, followed by an uncoating event necessary for the genomic RNA to become accessible. The uncoating might be triggered by the interaction of capsid proteins with ribosomes. Binding of ribosomes would release the genomic RNA since the same region is genomic RNA-binding and ribosome-binding. Specifically inhibits interleukin-1 receptor-associated kinase 1/IRAK1-dependent signaling during viral entry, representing a means by which the alphaviruses may evade innate immune detection and activation prior to viral gene expression. Provides the signal sequence for the translocation of the precursor of protein E3/E2 to the host endoplasmic reticulum. Furin-cleaved E3 remains associated with spike glycoprotein E1 and mediates pH protection of the latter during the transport via the secretory pathway. After virion release from the host cell, the assembly protein E3 is gradually released in the extracellular space. In terms of biological role, plays a role in viral attachment to target host cell, by binding to the cell receptor MXRA8. Synthesized as a p62 precursor which is processed by furin at the cell membrane just before virion budding, giving rise to E2-E1 heterodimer. The p62-E1 heterodimer is stable, whereas E2-E1 is unstable and dissociate at low pH. p62 is processed at the last step, presumably to avoid E1 fusion activation before its final export to cell surface. E2 C-terminus contains a transitory transmembrane that would be disrupted by palmitoylation, resulting in reorientation of the C-terminal tail from lumenal to cytoplasmic side. This step is critical since E2 C-terminus is involved in budding by interacting with capsid proteins. This release of E2 C-terminus in cytoplasm occurs lately in protein export, and precludes premature assembly of particles at the endoplasmic reticulum membrane. Its function is as follows. Acts as a viroporin that participates in virus glycoprotein processing and transport to the plasma membrane, cell permeabilization and budding of viral particles. The cation channel is permeable to Na(+)&gt;K(+)&gt;Ca(2+) in vitro. Disrupts the calcium homeostasis of the cell, probably at the endoplasmic reticulum level. This leads to cytoplasmic calcium elevation. Because of its lipophilic properties, the 6K protein is postulated to influence the selection of lipids that interact with the transmembrane domains of the glycoproteins, which, in turn, affects the deformability of the bilayer required for the extreme curvature that occurs as budding proceeds. Present in low amount in virions, about 3% compared to viral glycoproteins. Functionally, class II viral fusion protein. Fusion activity is inactive as long as E1 is bound to E2 in mature virion. After virus attachment to target cell via host MXRA8 and endocytosis, acidification of the endosome induce dissociation of E1/E2 heterodimer and concomitant trimerization of the E1 subunits. This E1 trimer is fusion active, and promotes release of viral nucleocapsid in cytoplasm after endosome and viral membrane fusion. Efficient fusion requires the presence of cholesterol and sphingolipid in the target membrane. The protein is Structural polyprotein of Anopheles amictus (Common banded mosquito).